The sequence spans 249 residues: Transmembrane protein 51 (249 aa).

The next 2 membrane-spanning stretches (helical) occupy residues 17 to 37 and 64 to 84; these read IGLGMLVLGVIMAMWNLVPGF and VAYVLVGAGMMLLLLAICLSI. Disordered stretches follow at residues 95-126, 161-199, and 213-249; these read ELARIQQQAGTVPHSQEEDSQEEEEDVSSRYY, TGLDEATPTSTRAETETSPGHAPDRQNSKLAKRLKPLKV, and RITLPDKNVPPPSIEPLTPPPLYDEVQAKAPDARPPD. Over residues 99-108 the composition is skewed to polar residues; it reads IQQQAGTVPH. A phosphoserine mark is found at Ser-109, Ser-114, Ser-178, and Ser-188. Positions 167-178 are enriched in polar residues; it reads TPTSTRAETETS. Residues 190 to 199 are compositionally biased toward basic residues; it reads LAKRLKPLKV. The span at 220-234 shows a compositional bias: pro residues; that stretch reads NVPPPSIEPLTPPPL.

It is found in the membrane. In Mus musculus (Mouse), this protein is Transmembrane protein 51 (Tmem51).